The sequence spans 708 residues: Ion-translocating oxidoreductase complex subunit C (708 aa).

2 4Fe-4S ferredoxin-type domains span residues 369-397 (GEPQEEQSCIRCSACADACPADLLPQQLY) and 407-436 (KATTHNIADCIECGACAWVCPSNIPLVQYF). Positions 377, 380, 383, 387, 416, 419, 422, and 426 each coordinate [4Fe-4S] cluster. The interval 630-682 (AKARKLEQQQANAEPEEQIDPRKAAVEAAIARAKARKLEQQQANAEPEEQIDP) is disordered.

Belongs to the 4Fe4S bacterial-type ferredoxin family. RnfC subfamily. The complex is composed of six subunits: RsxA, RsxB, RsxC, RsxD, RsxE and RsxG. [4Fe-4S] cluster is required as a cofactor.

It is found in the cell inner membrane. Its function is as follows. Part of a membrane-bound complex that couples electron transfer with translocation of ions across the membrane. Required to maintain the reduced state of SoxR. The sequence is that of Ion-translocating oxidoreductase complex subunit C from Escherichia coli (strain UTI89 / UPEC).